A 671-amino-acid polypeptide reads, in one-letter code: DNA ligase (671 aa).

Residues 34 to 38 (DAEYD), 83 to 84 (SL), and Glu117 each bind NAD(+). The active-site N6-AMP-lysine intermediate is the Lys119. Arg140, Glu177, Lys293, and Lys317 together coordinate NAD(+). Residues Cys411, Cys414, Cys429, and Cys434 each coordinate Zn(2+). In terms of domain architecture, BRCT spans 591–671 (KVGGKFTGKT…EFLQMLEGEQ (81 aa)).

This sequence belongs to the NAD-dependent DNA ligase family. LigA subfamily. Mg(2+) is required as a cofactor. The cofactor is Mn(2+).

It catalyses the reaction NAD(+) + (deoxyribonucleotide)n-3'-hydroxyl + 5'-phospho-(deoxyribonucleotide)m = (deoxyribonucleotide)n+m + AMP + beta-nicotinamide D-nucleotide.. In terms of biological role, DNA ligase that catalyzes the formation of phosphodiester linkages between 5'-phosphoryl and 3'-hydroxyl groups in double-stranded DNA using NAD as a coenzyme and as the energy source for the reaction. It is essential for DNA replication and repair of damaged DNA. In Geobacter metallireducens (strain ATCC 53774 / DSM 7210 / GS-15), this protein is DNA ligase.